Here is a 168-residue protein sequence, read N- to C-terminus: Protein C2-DOMAIN ABA-RELATED 3 (168 aa).

One can recognise a C2 domain in the interval 1–106; that stretch reads MSLMDNLLGI…IEALRMELSG (106 aa). Positions 24, 25, 30, 76, 77, 78, and 84 each coordinate Ca(2+).

It belongs to the plant CAR protein family. In terms of assembly, binds to PYR/PYL/RCAR abscisic acid intracellular receptors in an ABA-independent manner, both at the plasma membrane and in the nucleus. The cofactor is Ca(2+).

Its subcellular location is the cell membrane. It is found in the nucleus. Its function is as follows. Stimulates the GTPase/ATPase activities of Obg-like ATPases. Mediates the transient calcium-dependent interaction of PYR/PYL/RCAR abscisic acid (ABA) receptors with the plasma membrane and thus regulates ABA sensitivity. In Arabidopsis thaliana (Mouse-ear cress), this protein is Protein C2-DOMAIN ABA-RELATED 3.